Here is a 421-residue protein sequence, read N- to C-terminus: Protein MucB (421 aa).

The UmuC domain maps to F2–G187.

This sequence belongs to the DNA polymerase type-Y family.

Functionally, involved in UV protection and mutation. This is Protein MucB (mucB) from Salmonella typhimurium.